Reading from the N-terminus, the 413-residue chain is MAKLLAMILAGGEGRRLDPLTRDRAKPAVPFGGRYRIVDFVLSNMANSGILKMKVVVQYKSESLNTHVQRAWRLTSLLNQYVELVPAQMRVGPKWFEGSADAIYQNLNIITDEEPDFTFVFGADHVYRMDARQMLAFHQDRKADLTVAAVPIPVGEASEFGIIEVDAEGRMVGFVEKPTSDPKTMPGDPTRCLASMGNYLFTTEALVQEIVRDAGDPASAHDFGKSIVASMYQRKRVYVYDFARNVVPGQTERERGYWRDVGSIDAYFQANMDLVAVDPVFSLYNDEWPIFTVQYNYPPAKFVFNNERDNRIGRATDSLISEGCIISGAHVHHSILSPKVRVNSYATVEESIVFENVNIGRHCRIRRAIIDKHVDIPAHTTIGFDHEKDRKHFHVTESGIVIIPKGMRIEAGR.

Alpha-D-glucose 1-phosphate-binding positions include Gly161, 176–177, and Ser195; that span reads EK.

This sequence belongs to the bacterial/plant glucose-1-phosphate adenylyltransferase family. Homotetramer.

It catalyses the reaction alpha-D-glucose 1-phosphate + ATP + H(+) = ADP-alpha-D-glucose + diphosphate. It functions in the pathway glycan biosynthesis; glycogen biosynthesis. Involved in the biosynthesis of ADP-glucose, a building block required for the elongation reactions to produce glycogen. Catalyzes the reaction between ATP and alpha-D-glucose 1-phosphate (G1P) to produce pyrophosphate and ADP-Glc. The chain is Glucose-1-phosphate adenylyltransferase from Anaeromyxobacter dehalogenans (strain 2CP-C).